The following is a 227-amino-acid chain: Urease accessory protein UreF (227 aa).

It belongs to the UreF family. As to quaternary structure, ureD, UreF and UreG form a complex that acts as a GTP-hydrolysis-dependent molecular chaperone, activating the urease apoprotein by helping to assemble the nickel containing metallocenter of UreC. The UreE protein probably delivers the nickel.

The protein localises to the cytoplasm. Its function is as follows. Required for maturation of urease via the functional incorporation of the urease nickel metallocenter. This is Urease accessory protein UreF from Methylobacillus flagellatus (strain ATCC 51484 / DSM 6875 / VKM B-1610 / KT).